A 289-amino-acid chain; its full sequence is B- and T-lymphocyte attenuator (289 aa).

An N-terminal signal peptide occupies residues 1–30 (MKTLPAMLGTGKLFWVFFLIPYLDIWNIHG). The Ig-like V-type domain occupies 31–132 (KESCDVQLYI…LIESHSTTLY (102 aa)). At 31–157 (KESCDVQLYI…MASRPWLLYR (127 aa)) the chain is on the extracellular side. 3 cysteine pairs are disulfide-bonded: Cys34–Cys63, Cys58–Cys115, and Cys72–Cys79. Residues Asn75, Asn94, and Asn110 are each glycosylated (N-linked (GlcNAc...) asparagine). A helical transmembrane segment spans residues 158-178 (LLPLGGLPLLITTCFCLFCCL). Residues 179–289 (RRHQGKQNEL…TEYASICVRS (111 aa)) lie on the Cytoplasmic side of the membrane.

In terms of assembly, interacts with tyrosine phosphatases PTPN6/SHP-1 and PTPN11/SHP-2. Interacts with TNFRSF14/HVEM (via cysteine-rich domain 1). Post-translationally, phosphorylated on Tyr residues by TNFRSF14 and by antigen receptors cross-linking, both inducing association with PTPN6 and PTPN11. N-glycosylated.

The protein resides in the cell membrane. In terms of biological role, inhibitory receptor on lymphocytes that negatively regulates antigen receptor signaling via PTPN6/SHP-1 and PTPN11/SHP-2. May interact in cis (on the same cell) or in trans (on other cells) with TNFRSF14. In cis interactions, appears to play an immune regulatory role inhibiting in trans interactions in naive T cells to maintain a resting state. In trans interactions, can predominate during adaptive immune response to provide survival signals to effector T cells. In Homo sapiens (Human), this protein is B- and T-lymphocyte attenuator.